A 1078-amino-acid chain; its full sequence is Rho family-interacting cell polarization regulator 2 (1078 aa).

Residues Ser-46 and Ser-62 each carry the phosphoserine modification. An involved in cell filopodia formation region spans residues 80–138 (MHNLGHKNNNTPKEPQPKRVEEVYRALKNGLDEYLEFHQTELDKLTAQLKDMKRNSRLG). Positions 108-137 (NGLDEYLEFHQTELDKLTAQLKDMKRNSRL) form a coiled coil. At Ser-366 the chain carries Phosphoserine. Residues 488–508 (SSLSSQNEGTEDSSSASSRNS) are compositionally biased toward polar residues. Residues 488–534 (SSLSSQNEGTEDSSSASSRNSLGEDHEPKSHPKSDTVEPGKPGVATR) are disordered. Over residues 509–525 (LGEDHEPKSHPKSDTVE) the composition is skewed to basic and acidic residues. The residue at position 582 (Ser-582) is a Phosphoserine.

It belongs to the RIPOR family. Homooligomer; homooligomerization is regulated by RHOC and leads to the formation of concatemers through the association of N- and C-termini. Interacts (phosphorylated form) with 14-3-3 proteins; these interactions occur during myogenic cell differentiation and also induces T cell proliferation arrest. Interacts (phosphorylated form) with HDAC6; this interaction occurs during early myogenic differentiation, prevents HDAC6 to deacetylate tubulin and also induces T cell proliferation arrest. Interacts with DYSF; this interaction occurs during early myogenic differentiation. Interacts with MYOF. Interacts (via active GTP- or inactive GDP-bound forms) with RHOA; this interaction is direct, blocks the loading of GTP to RHOA and decreases upon chemokine CCL19 stimulation in primary T lymphocytes. Interacts with RHOC. Interacts (via phosphorylated form) with YWHAB; this interaction occurs in a chemokine-dependent manner and does not compete for binding of RIPOR2 with RHOA nor blocks inhibition of RIPOR2-mediated RHOA activity. Interacts with YWHAE. Interacts with YWHAQ. Post-translationally, phosphorylated. Chemokine-induced phosphorylation in neutrophils occurs in a PKC- and AKT-dependent manner, resulting in RIPOR2 interaction with YWHAB and stabilization. Phosphorylated by PKCA, AKT1 and MAPKAPK1A; in vitro. Expressed in the cochlea. Expressed in inner hair cells and outer hair cells and Hensen's cells (at protein level). Expressed in the brain, cerebellum, spinal cord, retina, heart, spleen liver, kidney, bladder, muscle and lung. Expressed in the cochlea of the inner ear.

The protein localises to the cytoplasm. It localises to the cytoskeleton. Its subcellular location is the cell projection. It is found in the filopodium. The protein resides in the stereocilium. The protein localises to the stereocilium membrane. It localises to the apical cell membrane. Functionally, acts as an inhibitor of the small GTPase RHOA and plays several roles in the regulation of myoblast and hair cell differentiation, lymphocyte T proliferation and neutrophil polarization. Plays a role in fetal mononuclear myoblast differentiation by promoting filopodia and myotube formation. Maintains naive T lymphocytes in a quiescent state and prevents chemokine-induced T lymphocyte responses, such as cell adhesion, polarization and migration. Involved also in the regulation of neutrophil polarization, chemotaxis and adhesion. Required for normal development of inner and outer hair cell stereocilia within the cochlea of the inner ear. Plays a role for maintaining the structural organization of the basal domain of stereocilia. Involved in mechanosensory hair cell function. Required for normal hearing. The sequence is that of Rho family-interacting cell polarization regulator 2 from Mus musculus (Mouse).